A 178-amino-acid chain; its full sequence is Small ribosomal subunit protein uS5 (178 aa).

Residues 17-80 (FEERIVEIRR…AAARASVVEI (64 aa)) enclose the S5 DRBM domain.

It belongs to the universal ribosomal protein uS5 family. Part of the 30S ribosomal subunit. Contacts proteins S4 and S8.

In terms of biological role, with S4 and S12 plays an important role in translational accuracy. Its function is as follows. Located at the back of the 30S subunit body where it stabilizes the conformation of the head with respect to the body. The protein is Small ribosomal subunit protein uS5 of Pseudothermotoga lettingae (strain ATCC BAA-301 / DSM 14385 / NBRC 107922 / TMO) (Thermotoga lettingae).